A 205-amino-acid chain; its full sequence is Outer-membrane lipoprotein LolB (205 aa).

An N-terminal signal peptide occupies residues 1–17 (MFLRHFIVFSFIALLAG). Cys18 is lipidated: N-palmitoyl cysteine. A lipid anchor (S-diacylglycerol cysteine) is attached at Cys18.

It belongs to the LolB family. Monomer.

The protein localises to the cell outer membrane. In terms of biological role, plays a critical role in the incorporation of lipoproteins in the outer membrane after they are released by the LolA protein. This Pseudomonas fluorescens (strain ATCC BAA-477 / NRRL B-23932 / Pf-5) protein is Outer-membrane lipoprotein LolB.